Consider the following 774-residue polypeptide: Phosphoribosylformylglycinamidine synthase subunit PurL (774 aa).

The active site involves His51. ATP is bound by residues Tyr54 and Lys93. Position 95 (Glu95) interacts with Mg(2+). Residues 96 to 99 and Arg118 contribute to the substrate site; that span reads SHNH. His97 (proton acceptor) is an active-site residue. A Mg(2+)-binding site is contributed by Asp119. Gln242 contributes to the substrate binding site. Mg(2+) is bound at residue Asp270. Position 314 to 316 (314 to 316) interacts with substrate; it reads ESQ. The ATP site is built by Asp514 and Gly551. Mg(2+) is bound at residue Asn552. Substrate is bound at residue Ser554.

Belongs to the FGAMS family. In terms of assembly, monomer. Part of the FGAM synthase complex composed of 1 PurL, 1 PurQ and 2 PurS subunits.

It localises to the cytoplasm. It carries out the reaction N(2)-formyl-N(1)-(5-phospho-beta-D-ribosyl)glycinamide + L-glutamine + ATP + H2O = 2-formamido-N(1)-(5-O-phospho-beta-D-ribosyl)acetamidine + L-glutamate + ADP + phosphate + H(+). Its pathway is purine metabolism; IMP biosynthesis via de novo pathway; 5-amino-1-(5-phospho-D-ribosyl)imidazole from N(2)-formyl-N(1)-(5-phospho-D-ribosyl)glycinamide: step 1/2. In terms of biological role, part of the phosphoribosylformylglycinamidine synthase complex involved in the purines biosynthetic pathway. Catalyzes the ATP-dependent conversion of formylglycinamide ribonucleotide (FGAR) and glutamine to yield formylglycinamidine ribonucleotide (FGAM) and glutamate. The FGAM synthase complex is composed of three subunits. PurQ produces an ammonia molecule by converting glutamine to glutamate. PurL transfers the ammonia molecule to FGAR to form FGAM in an ATP-dependent manner. PurS interacts with PurQ and PurL and is thought to assist in the transfer of the ammonia molecule from PurQ to PurL. This chain is Phosphoribosylformylglycinamidine synthase subunit PurL, found in Gloeobacter violaceus (strain ATCC 29082 / PCC 7421).